The chain runs to 29 residues: Omega-conotoxin MVIIC (29 aa).

The propeptide occupies 1–2 (TR). 3 cysteine pairs are disulfide-bonded: C3/C18, C10/C22, and C17/C28. The residue at position 28 (C28) is a Cysteine amide.

This sequence belongs to the conotoxin O1 superfamily. Not hydroxylated; hydroxylation, on a synthetic hydroxylated MVIIC, has a significant impact on the oxidative folding but not on the biological activity. As to expression, expressed by the venom duct.

Its subcellular location is the secreted. Its function is as follows. Omega-conotoxins act at presynaptic membranes, they bind and block voltage-gated calcium channels (Cav). This toxin preferentially blocks P/Q-type calcium channels (Cav2.1/CACNA1A) (IC(50)=0.60 nM). Also shows an inhibition on Cav2.2/CACNA1A channels (IC(50)=7.0 nM). This chain is Omega-conotoxin MVIIC, found in Conus magus (Magical cone).